The chain runs to 365 residues: Flagellar P-ring protein (365 aa).

The N-terminal stretch at 1 to 20 (MKLPHFFVLAALVLSGAAHA) is a signal peptide.

The protein belongs to the FlgI family. In terms of assembly, the basal body constitutes a major portion of the flagellar organelle and consists of four rings (L,P,S, and M) mounted on a central rod.

It is found in the periplasm. Its subcellular location is the bacterial flagellum basal body. In terms of biological role, assembles around the rod to form the L-ring and probably protects the motor/basal body from shearing forces during rotation. The chain is Flagellar P-ring protein from Thiobacillus denitrificans (strain ATCC 25259 / T1).